Reading from the N-terminus, the 582-residue chain is Membrane protein insertase YidC (582 aa).

Residues 3–23 (IQRALVITGIAVVSYLMIQAW) traverse the membrane as a helical segment. The disordered stretch occupies residues 38–92 (QVAEQGNSSSSDSADLPSVQSQTDNSIPSAQSDNDLPSVSPADIAQPTPSSQRIE). Residues 45-58 (SSSSDSADLPSVQS) show a composition bias toward low complexity. Residues 59 to 74 (QTDNSIPSAQSDNDLP) are compositionally biased toward polar residues. 5 helical membrane-spanning segments follow: residues 357 to 377 (TVDYGWLWFISQPIFALLVFL), 394 to 414 (GVGNWGVAIILLTLIIKAIFF), 464 to 484 (LGGCLPMLVQMPVFIALYYVL), 495 to 515 (FFLWINDLSVMDPYFVLPILM), and 541 to 561 (MPMIFAVFMLWFPAGLVLYWL).

The protein belongs to the OXA1/ALB3/YidC family. Type 1 subfamily. As to quaternary structure, interacts with the Sec translocase complex via SecD. Specifically interacts with transmembrane segments of nascent integral membrane proteins during membrane integration.

The protein resides in the cell inner membrane. In terms of biological role, required for the insertion and/or proper folding and/or complex formation of integral membrane proteins into the membrane. Involved in integration of membrane proteins that insert both dependently and independently of the Sec translocase complex, as well as at least some lipoproteins. Aids folding of multispanning membrane proteins. The protein is Membrane protein insertase YidC of Alcanivorax borkumensis (strain ATCC 700651 / DSM 11573 / NCIMB 13689 / SK2).